Reading from the N-terminus, the 48-residue chain is Delta-actitoxin-Bcg1b (48 aa).

Disulfide bonds link C4–C45, C6–C35, and C28–C46.

Belongs to the sea anemone sodium channel inhibitory toxin family. Type I subfamily.

It localises to the secreted. The protein localises to the nematocyst. Binds to the sodium channels Nav1.1/SCN1A (EC(50)=165 nM), Nav1.5/SCN5A (EC(50)=103 nM) and Nav1.6/SCN8A (EC(50)=133 nM), thereby delaying their inactivation. Also inhibits Nav1.2/SCN2A, Nav1.3/SCN3A, and Nav1.4/SCN4A, but to a lesser extent. Inhibits Nav1.5 differently from isoforms Nav1.1 and Nav1.6. In Nav1.5 the effect consists in a right-shift of inactivation; whereas in both Nav1.1 and Nav1.6 the effect consists in an incomplete inactivation. This chain is Delta-actitoxin-Bcg1b, found in Bunodosoma cangicum (Sea anemone).